A 198-amino-acid chain; its full sequence is MNLIPTVIEQTNRGERAYDIYSRLLKDRIIMLGSAIDDNVANSIVSQLLFLEAEDPEKDISIYINSPGGSITAGMAIYDTMQFIKPKVSTICIGMAASMGAFLLAAGEKGKRYALPNSEVMIHQPLGGAQGQATEIEIAAKRILLLRDKLNKVLAERTGQPLEVIERDTDRDNFKSADEALEYGLIDKVLTRNTEDQK.

Ser-98 (nucleophile) is an active-site residue. His-123 is a catalytic residue.

This sequence belongs to the peptidase S14 family. Fourteen ClpP subunits assemble into 2 heptameric rings which stack back to back to give a disk-like structure with a central cavity, resembling the structure of eukaryotic proteasomes.

It is found in the cytoplasm. The catalysed reaction is Hydrolysis of proteins to small peptides in the presence of ATP and magnesium. alpha-casein is the usual test substrate. In the absence of ATP, only oligopeptides shorter than five residues are hydrolyzed (such as succinyl-Leu-Tyr-|-NHMec, and Leu-Tyr-Leu-|-Tyr-Trp, in which cleavage of the -Tyr-|-Leu- and -Tyr-|-Trp bonds also occurs).. In terms of biological role, cleaves peptides in various proteins in a process that requires ATP hydrolysis. Has a chymotrypsin-like activity. Plays a major role in the degradation of misfolded proteins. The protein is ATP-dependent Clp protease proteolytic subunit of Bacillus velezensis (strain DSM 23117 / BGSC 10A6 / LMG 26770 / FZB42) (Bacillus amyloliquefaciens subsp. plantarum).